A 176-amino-acid polypeptide reads, in one-letter code: MALWRAYQRALAAHPWKVQVLTAGSLMGLGDIISQQLVERRGLQQHQTGRTLTMASLGCGFVGPVVGGWYRVLDHLIPGTTKVNALKKMLLDQGGFAPCFLGCFLPLVGVLNGMSAQDNWAKLKRDYPDALITNYYLWPAVQLANFYLVPLHYRLAVVQCVAVVWNSYLSWKAHQL.

4 helical membrane-spanning segments follow: residues 18–38 (VQVLTAGSLMGLGDIISQQLV), 57–77 (LGCGFVGPVVGGWYRVLDHLI), 94–114 (GGFAPCFLGCFLPLVGVLNGM), and 131–151 (LITNYYLWPAVQLANFYLVPL).

Belongs to the peroxisomal membrane protein PXMP2/4 family.

Its subcellular location is the mitochondrion inner membrane. Its function is as follows. Non-selective channel that modulates the membrane potential under normal conditions and oxidative stress, and is involved in mitochondrial homeostasis. Involved in mitochondrial deoxynucleoside triphosphates (dNTP) pool homeostasis and mitochondrial DNA (mtDNA) maintenance. May be involved in the regulation of reactive oxygen species metabolism and the control of oxidative phosphorylation. In Rattus norvegicus (Rat), this protein is Mitochondrial inner membrane protein Mpv17.